The following is a 449-amino-acid chain: Tubulin beta chain (449 aa).

Residues Gln11, Glu69, Ser138, Gly142, Thr143, Gly144, Asn204, and Asn226 each contribute to the GTP site. Position 69 (Glu69) interacts with Mg(2+).

It belongs to the tubulin family. As to quaternary structure, dimer of alpha and beta chains. A typical microtubule is a hollow water-filled tube with an outer diameter of 25 nm and an inner diameter of 15 nM. Alpha-beta heterodimers associate head-to-tail to form protofilaments running lengthwise along the microtubule wall with the beta-tubulin subunit facing the microtubule plus end conferring a structural polarity. Microtubules usually have 13 protofilaments but different protofilament numbers can be found in some organisms and specialized cells. Mg(2+) is required as a cofactor.

The protein resides in the cytoplasm. It localises to the cytoskeleton. Tubulin is the major constituent of microtubules, a cylinder consisting of laterally associated linear protofilaments composed of alpha- and beta-tubulin heterodimers. Microtubules grow by the addition of GTP-tubulin dimers to the microtubule end, where a stabilizing cap forms. Below the cap, tubulin dimers are in GDP-bound state, owing to GTPase activity of alpha-tubulin. This chain is Tubulin beta chain (TUB2), found in Candida albicans (Yeast).